A 175-amino-acid polypeptide reads, in one-letter code: uncharacterized protein (175 aa).

The span at 1–17 shows a compositional bias: basic and acidic residues; sequence MKVEGGESMHESEEGRD. Residues 1-21 form a disordered region; that stretch reads MKVEGGESMHESEEGRDVPNG.

This is an uncharacterized protein from Bacillus thuringiensis subsp. kurstaki.